Here is a 472-residue protein sequence, read N- to C-terminus: Glycerol-3-phosphate acyltransferase, chloroplastic (472 aa).

The N-terminal 102 residues, 1-102 (MLVLSSSAPP…EIPVKKEDDN (102 aa)), are a transit peptide targeting the chloroplast. An HXXXXD motif motif is present at residues 241 to 246 (HQSEAD).

The protein belongs to the GPAT/DAPAT family.

The protein localises to the plastid. It is found in the chloroplast stroma. It carries out the reaction sn-glycerol 3-phosphate + an acyl-CoA = a 1-acyl-sn-glycero-3-phosphate + CoA. It functions in the pathway phospholipid metabolism; CDP-diacylglycerol biosynthesis; CDP-diacylglycerol from sn-glycerol 3-phosphate: step 1/3. Its function is as follows. Esterifies acyl-group from acyl-ACP to the sn-1 position of glycerol-3-phosphate. The enzyme from chilling-resistant plants discriminates against non-fluid palmitic acid and selects oleic acid whereas the enzyme from sensitive plants accepts both fatty acids. This is an oleate-selective acyltransferase. The protein is Glycerol-3-phosphate acyltransferase, chloroplastic (GAT) of Spinacia oleracea (Spinach).